The chain runs to 187 residues: Large ribosomal subunit protein bL25 (187 aa).

Belongs to the bacterial ribosomal protein bL25 family. CTC subfamily. In terms of assembly, part of the 50S ribosomal subunit; part of the 5S rRNA/L5/L18/L25 subcomplex. Contacts the 5S rRNA. Binds to the 5S rRNA independently of L5 and L18.

Functionally, this is one of the proteins that binds to the 5S RNA in the ribosome where it forms part of the central protuberance. The chain is Large ribosomal subunit protein bL25 from Tropheryma whipplei (strain Twist) (Whipple's bacillus).